The primary structure comprises 886 residues: Alanine--tRNA ligase (886 aa).

The Zn(2+) site is built by H570, H574, C673, and H677.

Belongs to the class-II aminoacyl-tRNA synthetase family. Zn(2+) serves as cofactor.

The protein localises to the cytoplasm. It catalyses the reaction tRNA(Ala) + L-alanine + ATP = L-alanyl-tRNA(Ala) + AMP + diphosphate. Catalyzes the attachment of alanine to tRNA(Ala) in a two-step reaction: alanine is first activated by ATP to form Ala-AMP and then transferred to the acceptor end of tRNA(Ala). Also edits incorrectly charged Ser-tRNA(Ala) and Gly-tRNA(Ala) via its editing domain. The protein is Alanine--tRNA ligase of Chlorobium chlorochromatii (strain CaD3).